A 195-amino-acid chain; its full sequence is MGVRGRLALLPLALLCLLVLALGLPVLGAPARLICDSRVLERYILEAKEAENVTMGCAEGCSLGENITVPDTKVNFHHWKKSEAGRHAVEVWQGLALLSEAMLRSQALLANSSQLPETLQVHVDKAVSGLRSLTSLLRALGVQKEAVSPPEAASSAAPLRTVAADTLCKLFRIYSNFLRGKLKLYTGEACRRGDR.

The signal sequence occupies residues 1–28; that stretch reads MGVRGRLALLPLALLCLLVLALGLPVLG. 2 disulfide bridges follow: Cys35/Cys190 and Cys57/Cys61. Asn52 carries N-linked (GlcNAc...) asparagine glycosylation. 2 N-linked (GlcNAc...) asparagine glycosylation sites follow: Asn66 and Asn111.

This sequence belongs to the EPO/TPO family.

The protein resides in the secreted. Its function is as follows. Hormone involved in the regulation of erythrocyte proliferation and differentiation and the maintenance of a physiological level of circulating erythrocyte mass. Binds to EPOR leading to EPOR dimerization and JAK2 activation thereby activating specific downstream effectors, including STAT1 and STAT3. This Oryctolagus cuniculus (Rabbit) protein is Erythropoietin (EPO).